We begin with the raw amino-acid sequence, 467 residues long: Serine decarboxylase 2 (467 aa).

Residue His178 participates in substrate binding. Lys290 carries the post-translational modification N6-(pyridoxal phosphate)lysine.

This sequence belongs to the group II decarboxylase family. The cofactor is pyridoxal 5'-phosphate.

It catalyses the reaction L-serine + H(+) = ethanolamine + CO2. Catalyzes the biosynthesis of ethanolamine from serine. Decarboxylation of free serine is the major source of ethanolamine production in plants and ethanolamine metabolism is crucial for the synthesis of choline, phosphatidylethanolamine (PE) and phosphatidylcholine (PC), and thus for plant growth. The chain is Serine decarboxylase 2 from Oryza sativa subsp. japonica (Rice).